The chain runs to 257 residues: Acetylglutamate kinase (257 aa).

Substrate contacts are provided by residues 43–44 (GG), arginine 65, and asparagine 157. ATP is bound by residues 180 to 185 (DISGIL) and 208 to 210 (IIT).

It belongs to the acetylglutamate kinase family. ArgB subfamily. In terms of assembly, homodimer.

It is found in the cytoplasm. The catalysed reaction is N-acetyl-L-glutamate + ATP = N-acetyl-L-glutamyl 5-phosphate + ADP. It participates in amino-acid biosynthesis; L-arginine biosynthesis; N(2)-acetyl-L-ornithine from L-glutamate: step 2/4. In terms of biological role, catalyzes the ATP-dependent phosphorylation of N-acetyl-L-glutamate. This chain is Acetylglutamate kinase, found in Sodalis glossinidius (strain morsitans).